Reading from the N-terminus, the 157-residue chain is Transcription elongation factor GreA (157 aa).

Residues 25–43 (EGRAKVAEQLSEARDKGDL) are compositionally biased toward basic and acidic residues. Residues 25 to 47 (EGRAKVAEQLSEARDKGDLSENA) form a disordered region. The stretch at 43–79 (LSENAEYDAAKEAQEILERRIAKLEELMINARVINKD) forms a coiled coil.

Belongs to the GreA/GreB family.

Functionally, necessary for efficient RNA polymerase transcription elongation past template-encoded arresting sites. The arresting sites in DNA have the property of trapping a certain fraction of elongating RNA polymerases that pass through, resulting in locked ternary complexes. Cleavage of the nascent transcript by cleavage factors such as GreA or GreB allows the resumption of elongation from the new 3'terminus. GreA releases sequences of 2 to 3 nucleotides. This is Transcription elongation factor GreA from Amoebophilus asiaticus (strain 5a2).